The chain runs to 589 residues: Mediator of RNA polymerase II transcription subunit 26 (589 aa).

The 78-residue stretch at Gln10–Gly87 folds into the TFIIS N-terminal domain. Disordered regions lie at residues Leu83–Pro233, Ala247–Ser320, and Leu363–Glu441. Residues Leu190 to Asn213 are compositionally biased toward basic and acidic residues. The span at Ser259 to Ser268 shows a compositional bias: low complexity. The span at Lys276–Val297 shows a compositional bias: polar residues. 2 stretches are compositionally biased toward basic and acidic residues: residues Ser398–Thr412 and Thr424–His435.

It belongs to the Mediator complex subunit 26 family. As to quaternary structure, component of the Mediator complex.

It localises to the nucleus. Component of the Mediator complex, a coactivator involved in the regulated transcription of nearly all RNA polymerase II-dependent genes. Mediator functions as a bridge to convey information from gene-specific regulatory proteins to the basal RNA polymerase II transcription machinery. Mediator is recruited to promoters by direct interactions with regulatory proteins and serves as a scaffold for the assembly of a functional preinitiation complex with RNA polymerase II and the general transcription factors. This Danio rerio (Zebrafish) protein is Mediator of RNA polymerase II transcription subunit 26 (med26).